A 254-amino-acid polypeptide reads, in one-letter code: RNA polymerase sigma-D factor (254 aa).

The Polymerase core binding motif lies at 54 to 67 (DLMSLGMLGLYDAL). Residues 220–239 (LTEIGQVLNLSTSRISQIHS) constitute a DNA-binding region (H-T-H motif).

In terms of assembly, monomer. Interacts transiently with the RNAP core.

In terms of biological role, sigma factors are initiation factors that promote the attachment of RNA polymerase (RNAP) to specific initiation sites and are then released. This alternative sigma factor is required for the transcription of the flagellin and motility genes as well as for wild-type chemotaxis. Associates with the RNAP core during all growth phases with a peak at the transition to stationary phase. In Bacillus subtilis (strain 168), this protein is RNA polymerase sigma-D factor (sigD).